Here is a 314-residue protein sequence, read N- to C-terminus: MSFASDMKNELTRIEVDESNAKAELSALIRMNGALSLSNQQFVINVQTENATTARRIYSLIKRIFNVEVEILVRKKMKLKKNNIYICRTKMLAKEILNDLGILKKGVFTHDIDPDMIKDDEMKRSYLRGAFLAGGSVNNPETSSYHLEIFSQYEDHSEGLTKLMNSYELNAKHLERKKGSIAYLKEAEKISDFLSLIGGYQALLKFEDVRIVRDMRNSVNRLVNCETANLNKTVSAAMKQVESIQLIDEEIGLENLPDRLREVAKLRVEHQEISLKELGEMVSTGPISKSGMNHRLRKLNELADKIRNGEQIEL.

A DNA-binding region (H-T-H motif) is located at residues 274–308 (SLKELGEMVSTGPISKSGMNHRLRKLNELADKIRN).

The protein belongs to the WhiA family.

Functionally, involved in cell division and chromosome segregation. This chain is Probable cell division protein WhiA, found in Staphylococcus epidermidis (strain ATCC 35984 / DSM 28319 / BCRC 17069 / CCUG 31568 / BM 3577 / RP62A).